Consider the following 132-residue polypeptide: Large ribosomal subunit protein uL14 (132 aa).

This sequence belongs to the universal ribosomal protein uL14 family. In terms of assembly, part of the 50S ribosomal subunit. Forms a cluster with proteins L3 and L24e, part of which may contact the 16S rRNA in 2 intersubunit bridges.

Binds to 23S rRNA. Forms part of two intersubunit bridges in the 70S ribosome. This chain is Large ribosomal subunit protein uL14, found in Methanocaldococcus jannaschii (strain ATCC 43067 / DSM 2661 / JAL-1 / JCM 10045 / NBRC 100440) (Methanococcus jannaschii).